We begin with the raw amino-acid sequence, 52 residues long: uncharacterized protein (52 aa).

Residues 7–27 (MFQLFVFIIFAAVVFAAVTGF) form a helical membrane-spanning segment.

The protein localises to the membrane. This is an uncharacterized protein from Bacillus subtilis (strain 168).